A 309-amino-acid chain; its full sequence is Acetyl-coenzyme A carboxylase carboxyl transferase subunit beta (309 aa).

One can recognise a CoA carboxyltransferase N-terminal domain in the interval 27–296; sequence LWKKCPKCGA…PGTEAPIEFE (270 aa). Positions 31, 34, 50, and 53 each coordinate Zn(2+). The segment at 31 to 53 adopts a C4-type zinc-finger fold; it reads CPKCGAFLYKPELEKNLDVCPKC. The tract at residues 288 to 309 is disordered; sequence GTEAPIEFEVTEKPDVDEPEGQ.

This sequence belongs to the AccD/PCCB family. Acetyl-CoA carboxylase is a heterohexamer composed of biotin carboxyl carrier protein (AccB), biotin carboxylase (AccC) and two subunits each of ACCase subunit alpha (AccA) and ACCase subunit beta (AccD). Requires Zn(2+) as cofactor.

The protein localises to the cytoplasm. It carries out the reaction N(6)-carboxybiotinyl-L-lysyl-[protein] + acetyl-CoA = N(6)-biotinyl-L-lysyl-[protein] + malonyl-CoA. It participates in lipid metabolism; malonyl-CoA biosynthesis; malonyl-CoA from acetyl-CoA: step 1/1. Component of the acetyl coenzyme A carboxylase (ACC) complex. Biotin carboxylase (BC) catalyzes the carboxylation of biotin on its carrier protein (BCCP) and then the CO(2) group is transferred by the transcarboxylase to acetyl-CoA to form malonyl-CoA. This chain is Acetyl-coenzyme A carboxylase carboxyl transferase subunit beta, found in Marinobacter nauticus (strain ATCC 700491 / DSM 11845 / VT8) (Marinobacter aquaeolei).